The chain runs to 182 residues: Peptidyl-prolyl cis-trans isomerase ssp-1 (182 aa).

The WW domain maps to 7–41; the sequence is TGLPEDWEVRHSQSKNLPYYFNSATKTSRWEPPSG. The 112-residue stretch at 71–182 folds into the PpiC domain; the sequence is QGKIRCAHLL…SGLHLIERLE (112 aa).

The enzyme catalyses [protein]-peptidylproline (omega=180) = [protein]-peptidylproline (omega=0). Its function is as follows. Site-specific PPIase with respect to the amino acid N-terminal to the proline residue. Peptides with glutamate, phosphoserine, or phosphothreonine in the -1 position are the best substrates. It is not only able to isomerize small peptides but is also active in protein folding. The polypeptide is Peptidyl-prolyl cis-trans isomerase ssp-1 (ssp-1) (Neurospora crassa (strain ATCC 24698 / 74-OR23-1A / CBS 708.71 / DSM 1257 / FGSC 987)).